The sequence spans 506 residues: Glutamate--tRNA ligase (506 aa).

A 'HIGH' region motif is present at residues Pro24 to Leu34. The interval Thr124–Asp147 is disordered. The span at Val128–Asp147 shows a compositional bias: basic and acidic residues. The 'KMSKS' region signature appears at Lys268–Arg272. Lys271 provides a ligand contact to ATP.

The protein belongs to the class-I aminoacyl-tRNA synthetase family. Glutamate--tRNA ligase type 1 subfamily. In terms of assembly, monomer.

It localises to the cytoplasm. The enzyme catalyses tRNA(Glu) + L-glutamate + ATP = L-glutamyl-tRNA(Glu) + AMP + diphosphate. Its function is as follows. Catalyzes the attachment of glutamate to tRNA(Glu) in a two-step reaction: glutamate is first activated by ATP to form Glu-AMP and then transferred to the acceptor end of tRNA(Glu). This Kocuria rhizophila (strain ATCC 9341 / DSM 348 / NBRC 103217 / DC2201) protein is Glutamate--tRNA ligase.